Reading from the N-terminus, the 466-residue chain is Cytochrome c-552 (466 aa).

Residues 1–27 (MVRNLTKKSFALSALVAASLMASGVMA) form the signal peptide. A heme c-binding site is contributed by His-87. Heme-binding residues include Cys-115, Cys-118, and Lys-119. The heme c site is built by Cys-153, Cys-156, His-157, Cys-195, Cys-198, and His-199. Glu-201, Tyr-202, Lys-250, and Gln-252 together coordinate Ca(2+). Tyr-202 lines the substrate pocket. His-253 is a substrate binding site. Heme c-binding residues include His-264, Cys-271, Cys-274, His-275, His-290, Cys-303, Cys-306, His-307, and His-382.

Belongs to the cytochrome c-552 family. The cofactor is Ca(2+). Heme c is required as a cofactor.

It localises to the periplasm. It catalyses the reaction 6 Fe(III)-[cytochrome c] + NH4(+) + 2 H2O = 6 Fe(II)-[cytochrome c] + nitrite + 8 H(+). Its pathway is nitrogen metabolism; nitrate reduction (assimilation). Catalyzes the reduction of nitrite to ammonia, consuming six electrons in the process. In Shewanella sediminis (strain HAW-EB3), this protein is Cytochrome c-552.